The chain runs to 118 residues: Small ribosomal subunit protein uS13 (118 aa).

Residues 93–118 (RSLPVRGQRSKTNARTRKGPRKPIKK) form a disordered region.

The protein belongs to the universal ribosomal protein uS13 family. Part of the 30S ribosomal subunit. Forms a loose heterodimer with protein S19. Forms two bridges to the 50S subunit in the 70S ribosome.

Located at the top of the head of the 30S subunit, it contacts several helices of the 16S rRNA. In the 70S ribosome it contacts the 23S rRNA (bridge B1a) and protein L5 of the 50S subunit (bridge B1b), connecting the 2 subunits; these bridges are implicated in subunit movement. Contacts the tRNAs in the A and P-sites. The sequence is that of Small ribosomal subunit protein uS13 from Teredinibacter turnerae (strain ATCC 39867 / T7901).